A 493-amino-acid polypeptide reads, in one-letter code: Glycerol kinase (493 aa).

Thr12 provides a ligand contact to ADP. Thr12, Thr13, and Ser14 together coordinate ATP. Residue Thr12 participates in sn-glycerol 3-phosphate binding. Arg16 is a binding site for ADP. Sn-glycerol 3-phosphate is bound by residues Arg82, Glu83, Tyr132, and Asp239. Glycerol-binding residues include Arg82, Glu83, Tyr132, Asp239, and Gln240. The ADP site is built by Thr261 and Gly303. 4 residues coordinate ATP: Thr261, Gly303, Gln307, and Gly402. Residues Gly402 and Asn406 each coordinate ADP.

This sequence belongs to the FGGY kinase family.

It carries out the reaction glycerol + ATP = sn-glycerol 3-phosphate + ADP + H(+). Its pathway is polyol metabolism; glycerol degradation via glycerol kinase pathway; sn-glycerol 3-phosphate from glycerol: step 1/1. Functionally, key enzyme in the regulation of glycerol uptake and metabolism. Catalyzes the phosphorylation of glycerol to yield sn-glycerol 3-phosphate. The protein is Glycerol kinase of Thermococcus gammatolerans (strain DSM 15229 / JCM 11827 / EJ3).